The sequence spans 1039 residues: Probable inorganic carbon transporter subunit DabA 2 (1039 aa).

The Zn(2+) site is built by C462, D464, H721, and C736.

Belongs to the inorganic carbon transporter (TC 9.A.2) DabA family. In terms of assembly, forms a complex with DabB. Requires Zn(2+) as cofactor.

It localises to the cell inner membrane. In terms of biological role, part of an energy-coupled inorganic carbon pump. In Nitrobacter hamburgensis (strain DSM 10229 / NCIMB 13809 / X14), this protein is Probable inorganic carbon transporter subunit DabA 2.